Consider the following 59-residue polypeptide: MAVPARKTSKTKKRMRRGHIKLNVPGLTPCPNCGELRKSHMVCPSCGYYDGKQVVNTNN.

The protein belongs to the bacterial ribosomal protein bL32 family.

This Limosilactobacillus reuteri (strain DSM 20016) (Lactobacillus reuteri) protein is Large ribosomal subunit protein bL32.